An 898-amino-acid polypeptide reads, in one-letter code: Protein translocase subunit SecA (898 aa).

Residues glutamine 87, 105–109 (GEGKT), and aspartate 512 each bind ATP. A compositionally biased stretch (polar residues) spans 855 to 865 (MQYQNNEGTSS). A disordered region spans residues 855-898 (MQYQNNEGTSSLHEKSEHKIGRNESCPCGSGKKYKHCHGSKAKY). A compositionally biased stretch (basic and acidic residues) spans 866–876 (LHEKSEHKIGR). The Zn(2+) site is built by cysteine 880, cysteine 882, cysteine 891, and histidine 892. Over residues 886 to 898 (KKYKHCHGSKAKY) the composition is skewed to basic residues.

The protein belongs to the SecA family. Monomer and homodimer. Part of the essential Sec protein translocation apparatus which comprises SecA, SecYEG and auxiliary proteins SecDF-YajC and YidC. The cofactor is Zn(2+).

It localises to the cell inner membrane. The protein resides in the cytoplasm. It carries out the reaction ATP + H2O + cellular proteinSide 1 = ADP + phosphate + cellular proteinSide 2.. Functionally, part of the Sec protein translocase complex. Interacts with the SecYEG preprotein conducting channel. Has a central role in coupling the hydrolysis of ATP to the transfer of proteins into and across the cell membrane, serving both as a receptor for the preprotein-SecB complex and as an ATP-driven molecular motor driving the stepwise translocation of polypeptide chains across the membrane. The protein is Protein translocase subunit SecA of Histophilus somni (strain 2336) (Haemophilus somnus).